Reading from the N-terminus, the 268-residue chain is Ribosomal RNA small subunit methyltransferase A (268 aa).

The S-adenosyl-L-methionine site is built by Asn-18, Leu-20, Gly-45, Glu-66, Asp-91, and Asn-112.

Belongs to the class I-like SAM-binding methyltransferase superfamily. rRNA adenine N(6)-methyltransferase family. RsmA subfamily.

It is found in the cytoplasm. It catalyses the reaction adenosine(1518)/adenosine(1519) in 16S rRNA + 4 S-adenosyl-L-methionine = N(6)-dimethyladenosine(1518)/N(6)-dimethyladenosine(1519) in 16S rRNA + 4 S-adenosyl-L-homocysteine + 4 H(+). Its function is as follows. Specifically dimethylates two adjacent adenosines (A1518 and A1519) in the loop of a conserved hairpin near the 3'-end of 16S rRNA in the 30S particle. May play a critical role in biogenesis of 30S subunits. This is Ribosomal RNA small subunit methyltransferase A from Shewanella baltica (strain OS223).